The primary structure comprises 584 residues: Tyrosine-protein kinase Dnt (584 aa).

The first 40 residues, 1 to 40 (MESVNKCGKSASTRNCTVKMSRKMWVLSLLALAALQLHSG), serve as a signal peptide directing secretion. The Extracellular segment spans residues 41-208 (SEVAAHLNVF…LETVMLPPTG (168 aa)). One can recognise a WIF domain in the interval 49–180 (VFLNPVEVMR…HLVFRRKKIC (132 aa)). N-linked (GlcNAc...) asparagine glycosylation is found at asparagine 124, asparagine 163, asparagine 168, and asparagine 183. The helical transmembrane segment at 209–229 (LITLVVGVSVAMGSVCLLLMI) threads the bilayer. Residues 230 to 584 (AYCVKGAANK…EFYSQITRYV (355 aa)) are Cytoplasmic-facing. The segment at 241-261 (QHHQHGGQPMRTSSFQRLNTH) is disordered. Over residues 250–261 (MRTSSFQRLNTH) the composition is skewed to polar residues. The region spanning 317–577 (VRLSSLLQEG…QLQSCLSEFY (261 aa)) is the Protein kinase domain. Residues 323–331 (LQEGTFGRV) and lysine 345 each bind ATP. The Proton acceptor role is filled by aspartate 442. Tyrosine 472 carries the phosphotyrosine; by autocatalysis modification.

It belongs to the protein kinase superfamily. Tyr protein kinase family. As to expression, expressed in dynamic domains in the embryonic epidermis, many of which border on sites of epithelial invagination into the embryo interior, including ventral furrow, cephalic furrow, fore- and hindgut, optic lobe and tracheal pits. Later in embryogenesis, expression is seen in imaginal tissues.

The protein localises to the cell membrane. The catalysed reaction is L-tyrosyl-[protein] + ATP = O-phospho-L-tyrosyl-[protein] + ADP + H(+). Its function is as follows. May play an essential role in neuronal pathway recognition and ventral muscle attachment site selection. This chain is Tyrosine-protein kinase Dnt (dnt), found in Drosophila melanogaster (Fruit fly).